The sequence spans 205 residues: tRNA (guanine-N(7)-)-methyltransferase (205 aa).

Residues Glu-34, Glu-59, Asp-86, and Asp-107 each contribute to the S-adenosyl-L-methionine site. Asp-107 is a catalytic residue. Substrate is bound at residue Lys-111. An interaction with RNA region spans residues 113–118 (RHEKRR). Substrate contacts are provided by residues Asp-144 and 182 to 185 (TGYE).

This sequence belongs to the class I-like SAM-binding methyltransferase superfamily. TrmB family.

The enzyme catalyses guanosine(46) in tRNA + S-adenosyl-L-methionine = N(7)-methylguanosine(46) in tRNA + S-adenosyl-L-homocysteine. Its pathway is tRNA modification; N(7)-methylguanine-tRNA biosynthesis. In terms of biological role, catalyzes the formation of N(7)-methylguanine at position 46 (m7G46) in tRNA. The chain is tRNA (guanine-N(7)-)-methyltransferase from Mycoplasmopsis synoviae (strain 53) (Mycoplasma synoviae).